A 463-amino-acid polypeptide reads, in one-letter code: Ribosomal protein uS12 methylthiotransferase RimO (463 aa).

Residues 15–130 form the MTTase N-terminal domain; that stretch reads PKVGFVSLGC…VMQAVHSHLP (116 aa). Residues Cys-24, Cys-60, Cys-89, Cys-161, Cys-165, and Cys-168 each coordinate [4Fe-4S] cluster. The Radical SAM core domain occupies 147-392; the sequence is LTPRHYAYLK…MEVAEQVSAK (246 aa). The TRAM domain occupies 395 to 463; sequence ARKVGKTLKV…ADGHDLWGEV (69 aa).

Belongs to the methylthiotransferase family. RimO subfamily. The cofactor is [4Fe-4S] cluster.

It localises to the cytoplasm. It carries out the reaction L-aspartate(89)-[ribosomal protein uS12]-hydrogen + (sulfur carrier)-SH + AH2 + 2 S-adenosyl-L-methionine = 3-methylsulfanyl-L-aspartate(89)-[ribosomal protein uS12]-hydrogen + (sulfur carrier)-H + 5'-deoxyadenosine + L-methionine + A + S-adenosyl-L-homocysteine + 2 H(+). Catalyzes the methylthiolation of an aspartic acid residue of ribosomal protein uS12. This chain is Ribosomal protein uS12 methylthiotransferase RimO, found in Paraburkholderia phymatum (strain DSM 17167 / CIP 108236 / LMG 21445 / STM815) (Burkholderia phymatum).